We begin with the raw amino-acid sequence, 159 residues long: NADH-quinone oxidoreductase subunit I (159 aa).

2 consecutive 4Fe-4S ferredoxin-type domains span residues Arg-51 to Asp-80 and Thr-90 to Asn-119. Residues Cys-60, Cys-63, Cys-66, Cys-70, Cys-99, Cys-102, Cys-105, and Cys-109 each contribute to the [4Fe-4S] cluster site.

It belongs to the complex I 23 kDa subunit family. As to quaternary structure, NDH-1 is composed of 14 different subunits. Subunits NuoA, H, J, K, L, M, N constitute the membrane sector of the complex. It depends on [4Fe-4S] cluster as a cofactor.

The protein localises to the cell inner membrane. The enzyme catalyses a quinone + NADH + 5 H(+)(in) = a quinol + NAD(+) + 4 H(+)(out). Its function is as follows. NDH-1 shuttles electrons from NADH, via FMN and iron-sulfur (Fe-S) centers, to quinones in the respiratory chain. The immediate electron acceptor for the enzyme in this species is believed to be ubiquinone. Couples the redox reaction to proton translocation (for every two electrons transferred, four hydrogen ions are translocated across the cytoplasmic membrane), and thus conserves the redox energy in a proton gradient. This chain is NADH-quinone oxidoreductase subunit I, found in Rickettsia typhi (strain ATCC VR-144 / Wilmington).